A 520-amino-acid polypeptide reads, in one-letter code: GMP synthase [glutamine-hydrolyzing] (520 aa).

The Glutamine amidotransferase type-1 domain maps to 9-202; sequence TILIIDFGSQ…VHRIVGVKPG (194 aa). The Nucleophile role is filled by cysteine 86. Catalysis depends on residues histidine 176 and glutamate 178. In terms of domain architecture, GMPS ATP-PPase spans 203-395; the sequence is WTMGAYREQA…LGLPDSFIGR (193 aa). Residue 230–236 participates in ATP binding; the sequence is SGGVDSS.

Homodimer.

The enzyme catalyses XMP + L-glutamine + ATP + H2O = GMP + L-glutamate + AMP + diphosphate + 2 H(+). The protein operates within purine metabolism; GMP biosynthesis; GMP from XMP (L-Gln route): step 1/1. Functionally, catalyzes the synthesis of GMP from XMP. This chain is GMP synthase [glutamine-hydrolyzing], found in Brucella melitensis biotype 2 (strain ATCC 23457).